The primary structure comprises 2090 residues: Host cell factor 1 (2090 aa).

At Ala2 the chain carries N-acetylalanine. Ser6 carries the phosphoserine modification. Kelch repeat units lie at residues 44-89 (LIVV…GFVC), 93-140 (RLLV…RLGH), 148-194 (KCYL…ITYG), 217-265 (KLVI…TIGN), and 266-313 (KMYV…LMDT). Residues Lys105, Lys163, and Lys244 each participate in a glycyl lysine isopeptide (Lys-Gly) (interchain with G-Cter in ubiquitin) cross-link. Lys282 participates in a covalent cross-link: Glycyl lysine isopeptide (Lys-Gly) (interchain with G-Cter in SUMO2). N6-acetyllysine is present on Lys288. Lys363 participates in a covalent cross-link: Glycyl lysine isopeptide (Lys-Gly) (interchain with G-Cter in ubiquitin). Positions 366–469 (PPARVQLVRA…TIQVLPTVPG (104 aa)) constitute a Fibronectin type-III 1 domain. Residues 407–434 (ATATSPTPNPVPSVPANPPKSPAPAAAA) are disordered. At Ser411 the chain carries Phosphoserine. Positions 413 to 428 (TPNPVPSVPANPPKSP) are enriched in pro residues. The interval 500–550 (LVTMRPAGQAGKAPVTVTSLPASVRMVVPTQSAQGTVIGSNPQMSGMAALA) is required for interaction with OGT. Omega-N-methylarginine is present on residues Arg504 and Arg524. Phosphoserine is present on residues Ser598, Ser666, and Ser669. Positions 610–722 (LKTAAAQVGT…KGPLPAGTIL (113 aa)) are interaction with SIN3A. Residues 750-902 (ILGISSVSPS…SLAGAGAHST (153 aa)) form an interaction with ZBTB17 region. Lys813 bears the N6-acetyllysine mark. The interval 813–912 (KIITAVPKIA…SASLATPITT (100 aa)) is interaction with GABP2. HCF repeat repeat units follow at residues 1010 to 1035 (TLVCSNPPCETHETGTTNTATTTVVA), 1072 to 1097 (VRVCSNPPCETHETGTTNTATTATSN), and 1101 to 1126 (QHGCSNPPCETHETGTTSTATTAMSS). The interval 1098–1140 (MAGQHGCSNPPCETHETGTTSTATTAMSSMGTGQQRDTRHTSS) is disordered. Residues 1114-1130 (TGTTSTATTAMSSMGTG) are compositionally biased toward low complexity. An HCF repeat 4; degenerate repeat occupies 1157–1182 (TQGTVKPQCQTQQANMTNTTMTVQAT). Ser1204 carries the post-translational modification Phosphoserine. The residue at position 1216 (Arg1216) is an Asymmetric dimethylarginine. Ser1223 bears the Phosphoserine mark. HCF repeat repeat units follow at residues 1295–1320 (TQVCSNPPCETHETGTTNTATTSNAG) and 1323–1348 (QRVCSNPPCETHETGTTHTATTATSN). 2 disordered regions span residues 1302–1374 (PCET…TTST) and 1444–1486 (TVTS…TTVS). Positions 1308–1321 (TGTTNTATTSNAGS) are enriched in low complexity. The HCF repeat 7; degenerate repeat unit spans residues 1358–1383 (QQPAGGRPCETHQTTSTGTTMSVSVG). Residues 1423–1448 (QRVCSNPPCETHETGTTHTATTVTSN) form an HCF repeat 8 repeat. The segment covering 1465-1475 (VVSTQGDSANI) has biased composition (polar residues). Residues 1476–1486 (TSSSGITTTVS) are compositionally biased toward low complexity. Thr1500 bears the Phosphothreonine mark. Ser1506, Ser1559, and Ser1826 each carry phosphoserine. Fibronectin type-III domains lie at 1853–1943 (PPPP…TCLP) and 1945–2061 (FPGA…TSKD). Residues Lys1862 and Lys1863 each participate in a glycyl lysine isopeptide (Lys-Gly) (interchain with G-Cter in ubiquitin) cross-link. A Phosphoserine modification is found at Ser1893. The tract at residues 2049–2090 (ATQVRWLQETSKDSSGTKPASKRPMSSPEMKSAPKKSKADGQ) is disordered. Position 2060 is an N6-acetyllysine (Lys2060). Lys2079 is covalently cross-linked (Glycyl lysine isopeptide (Lys-Gly) (interchain with G-Cter in SUMO2)).

Composed predominantly of six polypeptides ranging from 110 to 150 kDa and a minor 300 kDa polypeptide. The majority of N- and C-terminal cleavage products remain tightly, albeit non-covalently, associated. Interacts with POU2F1, CREB3, ZBTB17, EGR2, E2F4, CREBZF, SP1, GABP2, Sin3 HDAC complex (SIN3A, HDAC1, HDAC2, SUDS3), SAP30, SIN3B and FHL2. Component of a MLL1 complex, composed of at least the core components KMT2A/MLL1, ASH2L, HCFC1, WDR5 and RBBP5, as well as the facultative components BACC1, CHD8, DPY30, E2F6, HCFC2, HSP70, INO80C, KANSL1, LAS1L, MAX, MCRS1, MEN1, MGA, KAT8, PELP1, PHF20, PRP31, RING2, RUVBL1, RUVBL2, SENP3, TAF1, TAF4, TAF6, TAF7, TAF9 and TEX10. Component of a THAP1/THAP3-HCFC1-OGT complex that is required for the regulation of the transcriptional activity of RRM1. Interacts directly with THAP3 (via its HBM). Interacts (via the Kelch-repeat domain) with THAP1 (via the HBM); the interaction recruits HCHC1 to the RRM1. Interacts directly with OGT; the interaction, which requires the HCFC1 cleavage site domain, glycosylates and promotes the proteolytic processing of HCFC1 and retains OGT in the nucleus. Component of the SET1 complex, at least composed of the catalytic subunit (SETD1A or SETD1B), WDR5, WDR82, RBBP5, ASH2L, CXXC1, HCFC1 and DPY30. Component of the NSL complex at least composed of MOF/KAT8, KANSL1, KANSL2, KANSL3, MCRS1, PHF20, OGT1/OGT, WDR5 and HCFC1. Component of a complex at least composed of ZNF335, HCFC1, CCAR2, EMSY, MKI67, RBBP5, ASH2L and WDR5; the complex is formed as a result of interactions between components of a nuclear receptor-mediated transcription complex and a histone methylation complex. Within the complex interacts with ZNF335. Interacts with TET2 and TET3. Interacts with HCFC1R1. Interacts with THAP11. Interacts (via Kelch domain) with KMT2E (via HBM motif). Interacts with E2F1. Accessory scaffold component of the polycomb repressive deubiquitinase (PR-DUB) complex, at least composed of BAP1, one of ASXL1, ASXL2 or (probably) ASXL3 and one of MBD5 or MBD6; the PR-DUB core associates with a number of accessory proteins, including FOXK1, FOXK2, KDM1B, HCFC1, YY1 and OGT. Interacts with YY1 (via Gly-rich region); the interaction is direct. Interacts with BAP1 (via HBM-like motif). Post-translationally, proteolytically cleaved at one or several PPCE--THET sites within the HCF repeats. Cleavage is promoted by O-glycosylation. Further cleavage of the primary N- and C-terminal chains results in a 'trimming' and accumulation of the smaller chains. Cleavage is promoted by O-glycosylation. O-glycosylated. GlcNAcylation by OGT promotes proteolytic processing. In terms of processing, ubiquitinated. Lys-1862 and Lys-1863 are ubiquitinated both via 'Lys-48'- and 'Lys-63'-linked polyubiquitin chains. BAP1 mediated deubiquitination of 'Lys-48'-linked polyubiquitin chains; deubiquitination by BAP1 does not seem to stabilize the protein.

It is found in the cytoplasm. Its subcellular location is the nucleus. Transcriptional coregulator. Serves as a scaffold protein, bridging interactions between transcription factors, including THAP11 and ZNF143, and transcriptional coregulators. Involved in control of the cell cycle. Also antagonizes transactivation by ZBTB17 and GABP2; represses ZBTB17 activation of the p15(INK4b) promoter and inhibits its ability to recruit p300. Coactivator for EGR2 and GABP2. Tethers the chromatin modifying Set1/Ash2 histone H3 'Lys-4' methyltransferase (H3K4me) and Sin3 histone deacetylase (HDAC) complexes (involved in the activation and repression of transcription respectively) together. As part of the NSL complex it may be involved in acetylation of nucleosomal histone H4 on several lysine residues. Recruits KMT2E to E2F1 responsive promoters promoting transcriptional activation and thereby facilitates G1 to S phase transition. Modulates expression of homeobox protein PDX1, perhaps acting in concert with transcription factor E2F1, thereby regulating pancreatic beta-cell growth and glucose-stimulated insulin secretion. May negatively modulate transcriptional activity of FOXO3. The polypeptide is Host cell factor 1 (Mesocricetus auratus (Golden hamster)).